A 146-amino-acid chain; its full sequence is UPF0260 protein VP2169 (146 aa).

Belongs to the UPF0260 family.

The polypeptide is UPF0260 protein VP2169 (Vibrio parahaemolyticus serotype O3:K6 (strain RIMD 2210633)).